Here is a 351-residue protein sequence, read N- to C-terminus: MKNFILLAVSSILLVDLLPTHFEHNVDLSRAINVNGVSFNNVDTSSLGAAQVRQSASRGRGLGEKPKEGADKEKKKEKEKEKEEEPKKPNENKLKQPEQPAAGAGGEQPAAGAGGEQPAAGAGGEQPAAGARGEQPAAGAGGEQPAAGAGGEQPAAGAGGEQPAAGAGGEQPAAGAGGEQPAAGARGEQPAAGAGGEQPAAGAGGEQPAAGARGEQPAAGAGGEQPAPAPRREQPAPGAVAGDGARGGNAGAGKGQGQNNQGANVPNEKVVNDYLHKIRSSVTTEWTPCSVTCGNGVRIRRKGHAGNKKAEDLTMDDLEVEACVMDKCAGIFNVVSNSLGLVILLVLALFN.

The N-terminal stretch at 1-22 (MKNFILLAVSSILLVDLLPTHF) is a signal peptide. Residues 50–266 (AQVRQSASRG…GQNNQGANVP (217 aa)) are disordered. Basic and acidic residues predominate over residues 61-96 (GLGEKPKEGADKEKKKEKEKEKEEEPKKPNENKLKQ). Residues 80-88 (KEKEEEPKK) form a required for the binding to heparan sulfate proteoglycans (HSPGs) on the surface of host hepatocytes region. A region I; contains the proteolytic cleavage site region spans residues 93-97 (KLKQP). Residues 97–219 (PEQPAAGAGG…AGARGEQPAA (123 aa)) are compositionally biased toward low complexity. Tandem repeats lie at residues 101-109 (AAGAGGEQP), 110-118 (AAGAGGEQP), 119-127 (AAGAGGEQP), 128-136 (AAGARGEQP), 137-145 (AAGAGGEQP), 146-154 (AAGAGGEQP), 155-163 (AAGAGGEQP), 164-172 (AAGAGGEQP), 173-181 (AAGAGGEQP), 182-190 (AAGARGEQP), 191-199 (AAGAGGEQP), 200-208 (AAGAGGEQP), 209-217 (AAGARGEQP), and 218-226 (AAGAGGEQP). The interval 101–226 (AAGAGGEQPA…PAAGAGGEQP (126 aa)) is 14 X 9 AA tandem repeats of A-A-G-A-[GR]-G-E-Q-P. Gly residues predominate over residues 244 to 256 (GARGGNAGAGKGQ). A TSP type-1 domain is found at 277-329 (KIRSSVTTEWTPCSVTCGNGVRIRRKGHAGNKKAEDLTMDDLEVEACVMDKCA). Cystine bridges form between C289/C323 and C293/C328. O-linked (Fuc) threonine glycosylation occurs at T292. C328 is lipidated: GPI-anchor amidated cysteine. Positions 329–351 (AGIFNVVSNSLGLVILLVLALFN) are cleaved as a propeptide — removed in mature form.

It belongs to the plasmodium circumsporozoite protein family. In terms of processing, during host cell invasion, proteolytically cleaved at the cell membrane in the region I by a papain-like cysteine protease of parasite origin. Cleavage is triggered by the sporozoite contact with highly sulfated heparan sulfate proteoglycans (HSPGs) present on the host hepatocyte cell surface. Cleavage exposes the TSP type-1 (TSR) domain and is required for productive invasion of host hepatocytes but not for adhesion to the host cell membrane. Cleavage is dispensable for sporozoite development in the oocyst, motility and for traversal of host and vector cells. Post-translationally, O-glycosylated; maybe by POFUT2.

The protein localises to the cell membrane. Its subcellular location is the cytoplasm. Essential sporozoite protein. In the mosquito vector, required for sporozoite development in the oocyst, migration through the vector hemolymph and entry into the vector salivary glands. In the vertebrate host, required for sporozoite migration through the host dermis and infection of host hepatocytes. Binds to highly sulfated heparan sulfate proteoglycans (HSPGs) on the surface of host hepatocytes. In terms of biological role, in the vertebrate host, binds to highly sulfated heparan sulfate proteoglycans (HSPGs) on the surface of host hepatocytes and is required for sporozoite invasion of the host hepatocytes. The polypeptide is Circumsporozoite protein (Plasmodium knowlesi (strain nuri)).